Consider the following 293-residue polypeptide: MPWIQLKLNTTGANAEELSDALMEAGAVSITFQDTHDTPVFEPLPGETRLWGDTDVIGLFDAETDMKDVVAILEQHPLLGAGFAHKIEQLEDKDWEREWMDNFHPMRFGERLWICPSWRDIPDENAVNVMLDPGLAFGTGTHPTTSLCLQWLDGLDLNGKTVIDFGCGSGILAIAALKLGAAKAIGIDIDPQAIQASRDNAERNGVSDRLELYLPKDQPEAMKADVVVANILAGPLRELAPLISVLPVEGGLLGLSGILASQAESVCDAYAELFTLDPVVEKEEWCRITGRKK.

Residues T145, G166, D188, and N230 each contribute to the S-adenosyl-L-methionine site.

It belongs to the methyltransferase superfamily. PrmA family.

The protein resides in the cytoplasm. It carries out the reaction L-lysyl-[protein] + 3 S-adenosyl-L-methionine = N(6),N(6),N(6)-trimethyl-L-lysyl-[protein] + 3 S-adenosyl-L-homocysteine + 3 H(+). Functionally, methylates ribosomal protein L11. In Salmonella agona (strain SL483), this protein is Ribosomal protein L11 methyltransferase.